The following is a 364-amino-acid chain: Mannose-1-phosphate guanyltransferase (364 aa).

This sequence belongs to the transferase hexapeptide repeat family.

Its subcellular location is the cytoplasm. The catalysed reaction is alpha-D-mannose 1-phosphate + GTP + H(+) = GDP-alpha-D-mannose + diphosphate. The protein operates within nucleotide-sugar biosynthesis; GDP-alpha-D-mannose biosynthesis; GDP-alpha-D-mannose from alpha-D-mannose 1-phosphate (GTP route): step 1/1. Functionally, involved in cell wall synthesis where it is required for glycosylation. Involved in cell cycle progression through cell-size checkpoint. The chain is Mannose-1-phosphate guanyltransferase (mpg1) from Hypocrea jecorina (Trichoderma reesei).